The chain runs to 430 residues: Adenylosuccinate synthetase (430 aa).

GTP is bound by residues 13–19 (GDEGKGK) and 41–43 (GHT). Catalysis depends on D14, which acts as the Proton acceptor. D14 and G41 together coordinate Mg(2+). Residues 14–17 (DEGK), 39–42 (NAGH), T130, R144, Q225, T240, and R304 contribute to the IMP site. H42 serves as the catalytic Proton donor. 300 to 306 (ATTGRAR) lines the substrate pocket. GTP contacts are provided by residues R306, 332 to 334 (KLD), and 414 to 416 (STG).

This sequence belongs to the adenylosuccinate synthetase family. Homodimer. It depends on Mg(2+) as a cofactor.

Its subcellular location is the cytoplasm. The catalysed reaction is IMP + L-aspartate + GTP = N(6)-(1,2-dicarboxyethyl)-AMP + GDP + phosphate + 2 H(+). Its pathway is purine metabolism; AMP biosynthesis via de novo pathway; AMP from IMP: step 1/2. Functionally, plays an important role in the de novo pathway of purine nucleotide biosynthesis. Catalyzes the first committed step in the biosynthesis of AMP from IMP. The protein is Adenylosuccinate synthetase of Pseudomonas fluorescens (strain ATCC BAA-477 / NRRL B-23932 / Pf-5).